A 125-amino-acid polypeptide reads, in one-letter code: Small ribosomal subunit protein uS12 (125 aa).

3-methylthioaspartic acid is present on aspartate 89.

Belongs to the universal ribosomal protein uS12 family. Part of the 30S ribosomal subunit. Contacts proteins S8 and S17. May interact with IF1 in the 30S initiation complex.

Functionally, with S4 and S5 plays an important role in translational accuracy. In terms of biological role, interacts with and stabilizes bases of the 16S rRNA that are involved in tRNA selection in the A site and with the mRNA backbone. Located at the interface of the 30S and 50S subunits, it traverses the body of the 30S subunit contacting proteins on the other side and probably holding the rRNA structure together. The combined cluster of proteins S8, S12 and S17 appears to hold together the shoulder and platform of the 30S subunit. The polypeptide is Small ribosomal subunit protein uS12 (Clostridium kluyveri (strain ATCC 8527 / DSM 555 / NBRC 12016 / NCIMB 10680 / K1)).